A 502-amino-acid polypeptide reads, in one-letter code: MSIIDTRTPEPKRFISGATGDWEVVIGMEVHAQVTSESKLFSGASTAFGAEPNSNVSLVDAAMPGMLPVINLECVRQAVRTGIGLNAQINLKSVFDRKNYFYPDLPQGYQISQFKQPIVGEGKIMISVGPDNKGQFEDVEIGIERLHLEQDAGKSMHDQHPTMSYVDLNRSGVALMEIVSKPDLRSSDEARAYLTKLRTIVRYLGTCDGNMDEGSMRADVNVSVRRPGGEFGTRCEIKNVNSIRFVGQAIEYEARRQIAILEDGGVIDQETRLFDPVKGETRSMRSKEEAHDYRYFPDPDLLPLEFDQAFVDALAAKLPELPDVKKQRLVETLGISVYDASILVTEKAIADYYEAVAEGRDGKAAANWVINDLLGALNKAGKDIEESPISPAQLGAIIDLIKEGTISGKIAKDLFEIVWNEGGDPKKLVEERGMKQVTDTGAIEKAVDDVIAANPDKVEQAKAKAKPTLAGWFVGQVMKATGGKANPQAVNELVKSKLGIEE.

It belongs to the GatB/GatE family. GatB subfamily. Heterotrimer of A, B and C subunits.

It carries out the reaction L-glutamyl-tRNA(Gln) + L-glutamine + ATP + H2O = L-glutaminyl-tRNA(Gln) + L-glutamate + ADP + phosphate + H(+). The enzyme catalyses L-aspartyl-tRNA(Asn) + L-glutamine + ATP + H2O = L-asparaginyl-tRNA(Asn) + L-glutamate + ADP + phosphate + 2 H(+). In terms of biological role, allows the formation of correctly charged Asn-tRNA(Asn) or Gln-tRNA(Gln) through the transamidation of misacylated Asp-tRNA(Asn) or Glu-tRNA(Gln) in organisms which lack either or both of asparaginyl-tRNA or glutaminyl-tRNA synthetases. The reaction takes place in the presence of glutamine and ATP through an activated phospho-Asp-tRNA(Asn) or phospho-Glu-tRNA(Gln). The polypeptide is Aspartyl/glutamyl-tRNA(Asn/Gln) amidotransferase subunit B (Brucella suis (strain ATCC 23445 / NCTC 10510)).